The chain runs to 338 residues: Tagatose 1,6-diphosphate aldolase (338 aa).

The protein belongs to the aldolase LacD family.

It carries out the reaction D-tagatofuranose 1,6-bisphosphate = D-glyceraldehyde 3-phosphate + dihydroxyacetone phosphate. The protein operates within carbohydrate metabolism; D-tagatose 6-phosphate degradation; D-glyceraldehyde 3-phosphate and glycerone phosphate from D-tagatose 6-phosphate: step 2/2. The protein is Tagatose 1,6-diphosphate aldolase of Listeria monocytogenes serotype 4b (strain CLIP80459).